We begin with the raw amino-acid sequence, 166 residues long: Protein-export protein SecB (166 aa).

It belongs to the SecB family. As to quaternary structure, homotetramer, a dimer of dimers. One homotetramer interacts with 1 SecA dimer.

It is found in the cytoplasm. Its function is as follows. One of the proteins required for the normal export of preproteins out of the cell cytoplasm. It is a molecular chaperone that binds to a subset of precursor proteins, maintaining them in a translocation-competent state. It also specifically binds to its receptor SecA. The polypeptide is Protein-export protein SecB (Actinobacillus pleuropneumoniae serotype 5b (strain L20)).